A 504-amino-acid chain; its full sequence is MVSIRADEISNTLRERIEQYNREVKIVNTGTVLQVGDGIARIHGLDEVMAGELVEFEEGTIGIALNLESTNVGVVLMGDGLMIEEGSSVKATGRIAQIPVSEAYLGRVLNALAKPIDGRGEISASESRLIESPAPGIISRRSVYEPLQTGLVAIDSMIPIGRGQRELIIGDRQTGKTAVATDTILNQQGQNVICVYVAIGQKASSVAQVVTTLQEGGAMEYTIVVAEMADSPATLQYLAPYTGAALAEYFMYRKQHTLIIYDDLSKQAQAYRQMSLLLRRPPGREAYPGDVFYLHSRLLERAAKSNSSLGEGSMTALPIVETQSGDVSAYIPTNVISITDGQIFLSADLFNAGIRPAINVGISVSRVGSAAQTKAMKQVAGKLKLELAQFTELEAFAQFASDLDKATQSQLARGRRLRELLKQSQSAPLTVGEQIMTVYTGTKGYLDSLEIGQVSKFLDALRTHLKTNKPQFQEIISSTKTFTEEAEVLLKEAIQEQMERFLLQ.

ATP is bound at residue 170–177; the sequence is GDRQTGKT.

Belongs to the ATPase alpha/beta chains family. As to quaternary structure, F-type ATPases have 2 components, CF(1) - the catalytic core - and CF(0) - the membrane proton channel. CF(1) has five subunits: alpha(3), beta(3), gamma(1), delta(1), epsilon(1). CF(0) has four main subunits: a, b, b' and c.

It localises to the plastid. It is found in the chloroplast thylakoid membrane. The enzyme catalyses ATP + H2O + 4 H(+)(in) = ADP + phosphate + 5 H(+)(out). Functionally, produces ATP from ADP in the presence of a proton gradient across the membrane. The alpha chain is a regulatory subunit. The protein is ATP synthase subunit alpha, chloroplastic of Jasminum nudiflorum (Winter jasmine).